We begin with the raw amino-acid sequence, 70 residues long: U2-agatoxin-Ao1m (70 aa).

The first 20 residues, 1–20 (MRAIISLFLISAMVFSMIQA), serve as a signal peptide directing secretion. Positions 21–34 (VPEEXGLQLSEDER) are excised as a propeptide. Intrachain disulfides connect Cys-37–Cys-53, Cys-44–Cys-58, and Cys-52–Cys-68. Leu-69 bears the Leucine amide mark.

This sequence belongs to the neurotoxin 01 (U2-agtx) family. Expressed by the venom gland.

It localises to the secreted. Its function is as follows. Insect active toxin causing rapid but reversible paralysis in crickets. No activity shown in mammals. Does not show effect on mammalian voltage-gated calcium channels. This is U2-agatoxin-Ao1m from Agelena orientalis (Funnel-web spider).